The primary structure comprises 85 residues: Large ribosomal subunit protein uL29 (85 aa).

This sequence belongs to the universal ribosomal protein uL29 family.

The polypeptide is Large ribosomal subunit protein uL29 (Thermobifida fusca (strain YX)).